Reading from the N-terminus, the 225-residue chain is Cytidylate kinase (225 aa).

An ATP-binding site is contributed by 12–20 (GPSGAGKGT).

Belongs to the cytidylate kinase family. Type 1 subfamily.

Its subcellular location is the cytoplasm. The enzyme catalyses CMP + ATP = CDP + ADP. It carries out the reaction dCMP + ATP = dCDP + ADP. The polypeptide is Cytidylate kinase (Stenotrophomonas maltophilia (strain K279a)).